The chain runs to 415 residues: Histidine--tRNA ligase (415 aa).

This sequence belongs to the class-II aminoacyl-tRNA synthetase family. As to quaternary structure, homodimer.

The protein localises to the cytoplasm. It carries out the reaction tRNA(His) + L-histidine + ATP = L-histidyl-tRNA(His) + AMP + diphosphate + H(+). The chain is Histidine--tRNA ligase from Gluconacetobacter diazotrophicus (strain ATCC 49037 / DSM 5601 / CCUG 37298 / CIP 103539 / LMG 7603 / PAl5).